A 747-amino-acid polypeptide reads, in one-letter code: UPF0313 protein PA4928 (747 aa).

In terms of domain architecture, Radical SAM core spans 371–640; that stretch reads AYEMIRFSVN…KSDQQRRLHK (270 aa). 3 residues coordinate [4Fe-4S] cluster: Cys-385, Cys-389, and Cys-392. Positions 670-747 are disordered; that stretch reads GKHHLVPTYQ…KKSRQPNIPR (78 aa).

It belongs to the UPF0313 family. [4Fe-4S] cluster serves as cofactor.

This Pseudomonas aeruginosa (strain ATCC 15692 / DSM 22644 / CIP 104116 / JCM 14847 / LMG 12228 / 1C / PRS 101 / PAO1) protein is UPF0313 protein PA4928.